Here is a 230-residue protein sequence, read N- to C-terminus: Fibrillarin-like rRNA/tRNA 2'-O-methyltransferase (230 aa).

S-adenosyl-L-methionine-binding positions include 87 to 88, 105 to 106, 130 to 131, and 150 to 153; these read TT, EY, DA, and DVAQ.

As to quaternary structure, interacts with nop5. Component of box C/D small ribonucleoprotein (sRNP) particles that contain rpl7ae, FlpA and nop5, plus a guide RNA.

Its function is as follows. Involved in pre-rRNA and tRNA processing. Utilizes the methyl donor S-adenosyl-L-methionine to catalyze the site-specific 2'-hydroxyl methylation of ribose moieties in rRNA and tRNA. Site specificity is provided by a guide RNA that base pairs with the substrate. Methylation occurs at a characteristic distance from the sequence involved in base pairing with the guide RNA. This is Fibrillarin-like rRNA/tRNA 2'-O-methyltransferase from Methanocaldococcus jannaschii (strain ATCC 43067 / DSM 2661 / JAL-1 / JCM 10045 / NBRC 100440) (Methanococcus jannaschii).